Consider the following 439-residue polypeptide: Cysteine desulfurase-like protein ustD (439 aa).

The interval 1–25 (MKSVATSSLDDVDKDSVPLGSSING) is disordered. Pyridoxal 5'-phosphate is bound by residues 120-121 (TT), N206, and 255-257 (SWY). Position 258 is an N6-(pyridoxal phosphate)lysine (K258).

The protein belongs to the class-V pyridoxal-phosphate-dependent aminotransferase family. It depends on pyridoxal 5'-phosphate as a cofactor.

The protein operates within mycotoxin biosynthesis. Its function is as follows. Cysteine desulfurase-like protein; part of the gene cluster that mediates the biosynthesis of the secondary metabolite ustiloxin B, an antimitotic tetrapeptide. First, ustA is processed by the subtilisin-like endoprotease Kex2 that is outside the ustiloxin B gene cluster, at the C-terminal side of Arg-Lys, after transfer to Golgi apparatus through the endoplasmic reticulum (ER). Cleavage by KEX2 generates 16 peptides YAIG-I to YAIG-XVI. To process the precursor peptide further, at least two peptidases are necessary to cleave the N-terminal and C-terminal sides of the Tyr-Ala-Ile-Gly core peptide which serves as backbone for the synthesis of ustiloxin B, through cyclization and modification of the tyrosine with a non-protein coding amino acid, norvaline. One of the two peptidases must be the serine peptidase ustP; and the other pepdidase is probably ustH. Macrocyclization of the core peptide derived from ustA requires the tyrosinase ustQ, as well as the homologous oxidases ustYa and ustYb, and leads to the production of the first cyclization product N-desmethylustiloxin F. For the formation of N-desmethylustiloxin F, three oxidation steps are required, hydroxylation at the benzylic position, hydroxylation at either the aromatic ring of Tyr or beta-position of Ile, and oxidative cyclization. UstQ may catalyze the oxidation of a phenol moiety, whereas the ustYa and ustYb are most likely responsible for the remaining two-step oxidations. N-desmethylustiloxin F is then methylated by ustM to yield ustiloxin F which in turn substrate of the cytochrome P450 monooxygenase ustC which catalyzes the formation of S-deoxyustiloxin H. The flavoprotein monooxygenases ustF1 and ustF2 then participate in the modification of the side chain of S-deoxyustiloxin H, leading to the synthesis of an oxime intermediate, via ustiloxin H. Finally, carboxylative dehydration performed by the cysteine desulfurase-like protein ustD yields ustiloxin B. The chain is Cysteine desulfurase-like protein ustD from Aspergillus flavus (strain ATCC 200026 / FGSC A1120 / IAM 13836 / NRRL 3357 / JCM 12722 / SRRC 167).